The chain runs to 211 residues: Arginine exporter protein ArgO (211 aa).

Helical transmembrane passes span 1-21 (MLSY…PLGP), 37-57 (LMIA…GIFG), 68-88 (LLAL…FGAL), 111-131 (IIAT…DTFV), 147-167 (WFAL…ALLA), and 186-206 (LVGL…IHHI).

It belongs to the LysE/ArgO transporter (TC 2.A.75) family.

The protein localises to the cell inner membrane. The enzyme catalyses L-arginine(in) = L-arginine(out). In terms of biological role, involved in the export of arginine. Important to control the intracellular level of arginine and the correct balance between arginine and lysine. This is Arginine exporter protein ArgO from Enterobacter sp. (strain 638).